The primary structure comprises 172 residues: Disulfide bond formation protein B (172 aa).

Residues 1 to 11 are Cytoplasmic-facing; that stretch reads MNPFRWSFRAQ. The chain crosses the membrane as a helical span at residues 12 to 28; sequence FLLGFLACAGLLAYAIY. The Periplasmic portion of the chain corresponds to 29 to 46; sequence VQLHLGLEPCPLCIFQRI. Cys38 and Cys41 are disulfide-bonded. Residues 47 to 63 traverse the membrane as a helical segment; sequence AFAALAVFFLLGALHGP. At 64-70 the chain is on the cytoplasmic side; it reads RAAAGRK. A helical transmembrane segment spans residues 71–88; that stretch reads VYGVLSFIAAGVGMGIAA. Over 89-145 the chain is Periplasmic; that stretch reads RHVWVQIRPKDMMSSCGPPLSFLSETMGPFEVFRTVLTGTGDCGNIDWRFLGLSMPM. Cys104 and Cys131 form a disulfide bridge. The chain crosses the membrane as a helical span at residues 146 to 164; it reads WSMVWFVGLALWALYAGFK. Over 165–172 the chain is Cytoplasmic; the sequence is VRRSSVHH.

Belongs to the DsbB family.

The protein resides in the cell inner membrane. Required for disulfide bond formation in some periplasmic proteins. Acts by oxidizing the DsbA protein. The polypeptide is Disulfide bond formation protein B (Xanthomonas axonopodis pv. citri (strain 306)).